We begin with the raw amino-acid sequence, 474 residues long: Dol-P-Glc:Glc(2)Man(9)GlcNAc(2)-PP-Dol alpha-1,2-glucosyltransferase (474 aa).

The Cytoplasmic portion of the chain corresponds to 1 to 6 (MAQLEG). Residues 7-27 (YYFSAALSCTFLVSCLLFSAF) traverse the membrane as a helical segment. At 28–64 (SRALREPYMDEIFHLPQAQRYCEGRFSLSQWDPMITT) the chain is on the extracellular side. Residues 65-85 (LPGLYLVSVGVVKPASWILGW) form a helical membrane-spanning segment. The Cytoplasmic segment spans residues 86-97 (SEHVVCSIGMLR). A helical membrane pass occupies residues 98 to 118 (FVNLLFSVGNFYLLYLLFRKI). Residues 119 to 126 (QPRNKASS) are Extracellular-facing. Residues 127 to 147 (SIQRILSTLTLAVFPTLYFFN) form a helical membrane-spanning segment. Over 148-150 (FLY) the chain is Cytoplasmic. The chain crosses the membrane as a helical span at residues 151–171 (YTEAGSVFFTLFAYLMCLYGN). Over 172–175 (HRTS) the chain is Extracellular. A helical transmembrane segment spans residues 176 to 196 (ALLGFCGFMFRQTNIIWAAFC). Topologically, residues 197–256 (AGHIIAQKCSEAWKTELQKKKEERLPPAKGPLSELRRVLQFLLMYSMSLKNLSMLFLLTW) are cytoplasmic. A helical membrane pass occupies residues 257–277 (PYMLLLLAFFVFVVVNGGIVV). Topologically, residues 278–283 (GDRSSH) are extracellular. A helical transmembrane segment spans residues 284–304 (EACLHFPQLFYFFSFTAFFSF). Residues 305-317 (PHLLSPTKVKTFL) lie on the Cytoplasmic side of the membrane. A helical membrane pass occupies residues 318-338 (SLVWKRRVQFSVITLVSVFLV). Residues 339 to 365 (WKFTYVHKYLLADNRHYTFYVWKRVFQ) are Extracellular-facing. A helical transmembrane segment spans residues 366–386 (RHEIVKYLLVPAYMFAGWAVA). The Cytoplasmic segment spans residues 387–392 (DSLKSK). A helical membrane pass occupies residues 393-413 (SIFWNLMFFVCLVASTVPQKL). At 414-436 (LEFRYFILPYIIYRLNMPLPPIS) the chain is on the extracellular side. The chain crosses the membrane as a helical span at residues 437-457 (RLVCELGCYAVVNFLTFYIFL). At 458–473 (NKTFQWSDSHDIQRFM) the chain is on the cytoplasmic side.

The protein belongs to the ALG10 glucosyltransferase family. As to quaternary structure, interacts with KCNH1; may regulate KCNH1, possibly by regulating its N-glycosylation. Interacts with KCNH2; may reduce KCNH2 sensitivity to classic proarrhythmic drug blockade, possibly by regulating its N-glycosylation. Highly expressed in brain, skeletal muscle, uterus, small intestine and liver. Moderately expressed in lung and kidney. Weakly expressed in heart and stomach.

The protein localises to the endoplasmic reticulum membrane. The catalysed reaction is an alpha-D-Glc-(1-&gt;3)-alpha-D-Glc-(1-&gt;3)-alpha-D-Man-(1-&gt;2)-alpha-D-Man-(1-&gt;2)-alpha-D-Man-(1-&gt;3)-[alpha-D-Man-(1-&gt;2)-alpha-D-Man-(1-&gt;3)-[alpha-D-Man-(1-&gt;2)-alpha-D-Man-(1-&gt;6)]-alpha-D-Man-(1-&gt;6)]-beta-D-Man-(1-&gt;4)-beta-D-GlcNAc-(1-&gt;4)-alpha-D-GlcNAc-diphospho-di-trans,poly-cis-dolichol + a di-trans,poly-cis-dolichyl beta-D-glucosyl phosphate = a alpha-D-Glc-(1-&gt;2)-alpha-D-Glc-(1-&gt;3)-alpha-D-Glc-(1-&gt;3)-alpha-D-Man-(1-&gt;2)-alpha-D-Man-(1-&gt;2)-alpha-D-Man-(1-&gt;3)-[alpha-D-Man-(1-&gt;2)-alpha-D-Man-(1-&gt;3)-[alpha-D-Man-(1-&gt;2)-alpha-D-Man-(1-&gt;6)]-alpha-D-Man-(1-&gt;6)]-beta-D-Man-(1-&gt;4)-beta-D-GlcNAc-(1-&gt;4)-alpha-D-GlcNAc-diphospho-di-trans,poly-cis-dolichol + a di-trans,poly-cis-dolichyl phosphate + H(+). It participates in protein modification; protein glycosylation. Its function is as follows. Dol-P-Glc:Glc(2)Man(9)GlcNAc(2)-PP-Dol alpha-1,2-glucosyltransferase that operates in the biosynthetic pathway of dolichol-linked oligosaccharides, the glycan precursors employed in protein asparagine (N)-glycosylation. The assembly of dolichol-linked oligosaccharides begins on the cytosolic side of the endoplasmic reticulum membrane and finishes in its lumen. The sequential addition of sugars to dolichol pyrophosphate produces dolichol-linked oligosaccharides containing fourteen sugars, including two GlcNAcs, nine mannoses and three glucoses. Once assembled, the oligosaccharide is transferred from the lipid to nascent proteins by oligosaccharyltransferases. In the lumen of the endoplasmic reticulum, adds the third and last glucose residue from dolichyl phosphate glucose (Dol-P-Glc) onto the lipid-linked oligosaccharide intermediate Glc(2)Man(9)GlcNAc(2)-PP-Dol to produce Glc(3)Man(9)GlcNAc(2)-PP-Dol. This Rattus norvegicus (Rat) protein is Dol-P-Glc:Glc(2)Man(9)GlcNAc(2)-PP-Dol alpha-1,2-glucosyltransferase.